The chain runs to 210 residues: Peroxynitrite isomerase (210 aa).

A GXWXGXG motif is present at residues 21–27 (GQWEGQG). Residue H190 participates in heme b binding.

Belongs to the nitrobindin family. As to quaternary structure, homodimer. The cofactor is heme b.

The catalysed reaction is peroxynitrite = nitrate. Its pathway is nitrogen metabolism. In terms of biological role, heme-binding protein able to scavenge peroxynitrite and to protect free L-tyrosine against peroxynitrite-mediated nitration, by acting as a peroxynitrite isomerase that converts peroxynitrite to nitrate. Therefore, this protein likely plays a role in peroxynitrite sensing and in the detoxification of reactive nitrogen and oxygen species (RNS and ROS, respectively). Is able to bind nitric oxide (NO) in vitro, but may act as a sensor of peroxynitrite levels in vivo. This Renibacterium salmoninarum (strain ATCC 33209 / DSM 20767 / JCM 11484 / NBRC 15589 / NCIMB 2235) protein is Peroxynitrite isomerase.